The chain runs to 183 residues: Globin-like protein 26 (183 aa).

Positions Met-1 to Gln-25 are disordered. Residue Gly-2 is the site of N-myristoyl glycine attachment. The Nuclear localization signal signature appears at Pro-12–Glu-18. In terms of domain architecture, Globin spans Ile-26–Ser-166. Residues His-77 and His-109 each contribute to the heme site.

The protein belongs to the globin family. In terms of assembly, homodimer. Occurs in an equilibrium of monomeric and dimeric forms in solution. As to expression, detected in the head mesodermal cell. In the tail region, detected in the stomatointestinal and anal depressor muscle cells.

It localises to the cytoplasm. It is found in the nucleus lamina. The protein resides in the cell membrane. In terms of biological role, plays a role in electron transport. Utilizes the bis-histidyl hexacoordinated complex with iron to transfer electrons to cytochrome c and molecular oxygen. Plays a regulatory role in the periodicity of the defecation cycle under oxidative stress conditions. Not involved in imparting protection against general conditions of oxidative stress. May participate in redox reactions under anaerobic conditions. This chain is Globin-like protein 26, found in Caenorhabditis elegans.